The chain runs to 378 residues: Erythronate-4-phosphate dehydrogenase (378 aa).

The substrate site is built by Ser-45 and Thr-66. 2 residues coordinate NAD(+): Asp-146 and Thr-175. Arg-208 is a catalytic residue. Position 232 (Asp-232) interacts with NAD(+). Residue Glu-237 is part of the active site. Residue His-254 is the Proton donor of the active site. Gly-257 is an NAD(+) binding site. Tyr-258 serves as a coordination point for substrate.

This sequence belongs to the D-isomer specific 2-hydroxyacid dehydrogenase family. PdxB subfamily. As to quaternary structure, homodimer.

Its subcellular location is the cytoplasm. The enzyme catalyses 4-phospho-D-erythronate + NAD(+) = (R)-3-hydroxy-2-oxo-4-phosphooxybutanoate + NADH + H(+). It functions in the pathway cofactor biosynthesis; pyridoxine 5'-phosphate biosynthesis; pyridoxine 5'-phosphate from D-erythrose 4-phosphate: step 2/5. Its function is as follows. Catalyzes the oxidation of erythronate-4-phosphate to 3-hydroxy-2-oxo-4-phosphonooxybutanoate. In Salmonella arizonae (strain ATCC BAA-731 / CDC346-86 / RSK2980), this protein is Erythronate-4-phosphate dehydrogenase.